A 937-amino-acid chain; its full sequence is DNA mismatch repair protein msh-2 (937 aa).

659–666 (GPNMGGKS) contacts ATP.

This sequence belongs to the DNA mismatch repair MutS family. Heterodimer of msh2 and msh6.

The protein resides in the nucleus. Involved in post-replicative DNA-mismatch repair. Binds to mismatch-containing DNA. This chain is DNA mismatch repair protein msh-2 (msh-2), found in Neurospora crassa (strain ATCC 24698 / 74-OR23-1A / CBS 708.71 / DSM 1257 / FGSC 987).